We begin with the raw amino-acid sequence, 656 residues long: Bifunctional protein ThiO/ThiG (656 aa).

The interval 1-395 (MQTTSDVLII…HAAENSEGSK (395 aa)) is thiO. Residues 7-21 (VLIIGGGIIGLAIAV) and 48-50 (AGM) contribute to the FAD site. Glu-56 is a binding site for glycine. Residue Val-169 participates in FAD binding. Glycine-binding residues include Arg-298 and Arg-324. Position 322–328 (322–328 (HYRNGIL)) interacts with FAD. The tract at residues 396–656 (DLLEIAGRKF…ASSPLTGLVG (261 aa)) is thiG. Lys-498 functions as the Schiff-base intermediate with DXP in the catalytic mechanism. Residues Gly-559, 585 to 586 (AG), and 607 to 608 (NS) each bind 1-deoxy-D-xylulose 5-phosphate.

It in the N-terminal section; belongs to the DAO family. ThiO subfamily. In the C-terminal section; belongs to the ThiG family. Interacts with ThiH and ThiS. FAD serves as cofactor.

It localises to the cytoplasm. It carries out the reaction glycine + O2 + H2O = glyoxylate + H2O2 + NH4(+). The enzyme catalyses [ThiS sulfur-carrier protein]-C-terminal-Gly-aminoethanethioate + 2-iminoacetate + 1-deoxy-D-xylulose 5-phosphate = [ThiS sulfur-carrier protein]-C-terminal Gly-Gly + 2-[(2R,5Z)-2-carboxy-4-methylthiazol-5(2H)-ylidene]ethyl phosphate + 2 H2O + H(+). It participates in cofactor biosynthesis; thiamine diphosphate biosynthesis. Catalyzes the FAD-dependent oxidative deamination of glycine. Is essential for thiamine biosynthesis since the oxidation of glycine catalyzed by ThiO generates the glycine imine intermediate (dehydroglycine) required for the biosynthesis of the thiazole ring of thiamine pyrophosphate. Functionally, catalyzes the rearrangement of 1-deoxy-D-xylulose 5-phosphate (DXP) to produce the thiazole phosphate moiety of thiamine. Sulfur is provided by the thiocarboxylate moiety of the carrier protein ThiS. In vitro, sulfur can be provided by H(2)S. The protein is Bifunctional protein ThiO/ThiG (thiO/thiG) of Synechocystis sp. (strain ATCC 27184 / PCC 6803 / Kazusa).